The following is a 63-amino-acid chain: Large ribosomal subunit protein uL29 (63 aa).

It belongs to the universal ribosomal protein uL29 family.

This is Large ribosomal subunit protein uL29 from Photobacterium profundum (strain SS9).